The primary structure comprises 349 residues: Isopentenyl-diphosphate delta-isomerase (349 aa).

Residue 6-7 (RK) participates in substrate binding. Residues 62–64 (AMT), Ser-93, and Asn-122 contribute to the FMN site. Gln-152 is a binding site for substrate. Mg(2+) is bound at residue Glu-153. FMN contacts are provided by residues Lys-184, Thr-214, 258 to 259 (GG), and 280 to 281 (AG).

This sequence belongs to the IPP isomerase type 2 family. As to quaternary structure, homooctamer. Dimer of tetramers. It depends on FMN as a cofactor. Requires NADPH as cofactor. Mg(2+) is required as a cofactor.

The protein resides in the cytoplasm. It catalyses the reaction isopentenyl diphosphate = dimethylallyl diphosphate. Involved in the biosynthesis of isoprenoids. Catalyzes the 1,3-allylic rearrangement of the homoallylic substrate isopentenyl (IPP) to its allylic isomer, dimethylallyl diphosphate (DMAPP). The protein is Isopentenyl-diphosphate delta-isomerase of Bacillus mycoides (strain KBAB4) (Bacillus weihenstephanensis).